Here is a 161-residue protein sequence, read N- to C-terminus: Phosphopantetheine adenylyltransferase (161 aa).

Thr9 contacts substrate. ATP contacts are provided by residues 9-10 and His17; that span reads TF. Positions 41, 73, and 87 each coordinate substrate. Residues 88–90, Glu98, and 123–129 each bind ATP; these read GLR and YQFISGT.

This sequence belongs to the bacterial CoaD family. In terms of assembly, homohexamer. Mg(2+) is required as a cofactor.

The protein localises to the cytoplasm. The catalysed reaction is (R)-4'-phosphopantetheine + ATP + H(+) = 3'-dephospho-CoA + diphosphate. Its pathway is cofactor biosynthesis; coenzyme A biosynthesis; CoA from (R)-pantothenate: step 4/5. Functionally, reversibly transfers an adenylyl group from ATP to 4'-phosphopantetheine, yielding dephospho-CoA (dPCoA) and pyrophosphate. This chain is Phosphopantetheine adenylyltransferase, found in Janthinobacterium sp. (strain Marseille) (Minibacterium massiliensis).